A 323-amino-acid polypeptide reads, in one-letter code: tRNA U34 carboxymethyltransferase (323 aa).

Residues Lys91, Trp105, Lys110, Gly130, 152-154 (DPT), 181-182 (IE), Met196, Tyr200, and Arg315 each bind carboxy-S-adenosyl-L-methionine.

Belongs to the class I-like SAM-binding methyltransferase superfamily. CmoB family. Homotetramer.

The enzyme catalyses carboxy-S-adenosyl-L-methionine + 5-hydroxyuridine(34) in tRNA = 5-carboxymethoxyuridine(34) in tRNA + S-adenosyl-L-homocysteine + H(+). Its function is as follows. Catalyzes carboxymethyl transfer from carboxy-S-adenosyl-L-methionine (Cx-SAM) to 5-hydroxyuridine (ho5U) to form 5-carboxymethoxyuridine (cmo5U) at position 34 in tRNAs. The polypeptide is tRNA U34 carboxymethyltransferase (Escherichia coli O6:H1 (strain CFT073 / ATCC 700928 / UPEC)).